The following is a 78-amino-acid chain: Esculentin-2ISa (78 aa).

A signal peptide spans 1-22; sequence MFTLKKSLLLLFFLGTISLSVC. A propeptide spans 23–39 (removed in mature form); the sequence is KQERDADYEDKGEVEEV. A disulfide bridge connects residues Cys-72 and Cys-78.

Expressed by the skin glands.

The protein localises to the secreted. In terms of biological role, has antimicrobial activity against Gram-negative bacterium E.coli ATCC 8739 (MIC=12.5 ug), against Gram positive bacteria S.aureus ATCC 6538 (MIC=3.1 ug), methicillin-resistant S.aureus ATCC 43300 (MIC=25 ug), B.subtilis ATCC 6633 (MIC=6.3 ug) and against fungus C.albicans ATCC 90028 (MIC=100 ug). This chain is Esculentin-2ISa, found in Odorrana ishikawae (Ishikawa's frog).